Here is a 563-residue protein sequence, read N- to C-terminus: Sperm-tail PG-rich repeat-containing protein 2 (563 aa).

STPGR repeat units follow at residues 21 to 34 (VGPG…PKQQ), 63 to 73 (PGPAHYNVSQA), and 97 to 107 (GPGPASYDCPY). The segment at 131–163 (IPSIPSSGKSHGYHLNEDDTIMRRTPPSSDKTM) is disordered. STPGR repeat units lie at residues 200-219 (GPGP…YENI), 250-263 (PGPG…QFDH), 292-321 (TPAP…FGQR), 334-353 (LPGP…QVKK), 423-438 (LPAP…YDMS), 473-483 (GPGPATYNPIL), and 507-518 (SPGPTTYELSPF).

The polypeptide is Sperm-tail PG-rich repeat-containing protein 2 (Stpg2) (Rattus norvegicus (Rat)).